A 455-amino-acid chain; its full sequence is Anaerobic glycerol-3-phosphate dehydrogenase subunit B (455 aa).

Belongs to the anaerobic G-3-P dehydrogenase subunit B family. In terms of assembly, composed of a catalytic GlpA/B dimer and of membrane bound GlpC. FMN is required as a cofactor.

It carries out the reaction a quinone + sn-glycerol 3-phosphate = dihydroxyacetone phosphate + a quinol. Its pathway is polyol metabolism; glycerol degradation via glycerol kinase pathway; glycerone phosphate from sn-glycerol 3-phosphate (anaerobic route): step 1/1. Conversion of glycerol 3-phosphate to dihydroxyacetone. Uses fumarate or nitrate as electron acceptor. This Aliivibrio fischeri (strain MJ11) (Vibrio fischeri) protein is Anaerobic glycerol-3-phosphate dehydrogenase subunit B.